The following is a 257-amino-acid chain: ECF RNA polymerase sigma factor SigE (257 aa).

The tract at residues Leu-87–Arg-153 is sigma-70 factor domain-2. A Polymerase core binding motif is present at residues Asp-111 to Gln-114. Residues Leu-186–Leu-236 are sigma-70 factor domain-4. Residues Tyr-211–His-230 constitute a DNA-binding region (H-T-H motif).

It belongs to the sigma-70 factor family. ECF subfamily. In terms of assembly, interacts transiently with the RNA polymerase catalytic core formed by RpoA, RpoB, RpoC and RpoZ (2 alpha, 1 beta, 1 beta' and 1 omega subunit) to form the RNA polymerase holoenzyme that can initiate transcription. Interacts (via sigma-70 factor domain 4) with cognate anti-sigma-E factor RseA under reducing conditions, which stops the sigma factor from functioning.

In terms of biological role, sigma factors are initiation factors that promote the attachment of RNA polymerase to specific initiation sites and are then released. Extracytoplasmic function (ECF) sigma factors are held in an inactive form by an anti-sigma factor until released. Responds to surface stress (H(2)O(2)). In Mycobacterium tuberculosis (strain ATCC 35801 / TMC 107 / Erdman), this protein is ECF RNA polymerase sigma factor SigE (sigE).